We begin with the raw amino-acid sequence, 529 residues long: Beta-galactoside alpha-2,6-sialyltransferase 2 (529 aa).

Over 1–11 the chain is Cytoplasmic; the sequence is MKPHLKQWRQR. The chain crosses the membrane as a helical; Signal-anchor for type II membrane protein span at residues 12 to 32; sequence MLFGIFAWGLLFLLIFIYFTD. Residues 33-529 lie on the Lumenal side of the membrane; that stretch reads SNPAEPVPSS…PAPSPVIPHS (497 aa). Serine 69 carries O-linked (GalNAc...) serine glycosylation. A glycan (N-linked (GlcNAc...) asparagine) is linked at asparagine 211. 3 disulfides stabilise this stretch: cysteine 253–cysteine 519, cysteine 296–cysteine 448, and cysteine 466–cysteine 477.

The protein belongs to the glycosyltransferase 29 family. Post-translationally, O-glycosylated. In terms of tissue distribution, weakly expressed in some tissues, such as small intestine, colon and fetal brain.

It is found in the golgi apparatus. Its subcellular location is the golgi stack membrane. The enzyme catalyses a beta-D-galactoside + CMP-N-acetyl-beta-neuraminate = an N-acetyl-alpha-neuraminyl-(2-&gt;6)-beta-D-galactosyl derivative + CMP + H(+). In terms of biological role, transfers sialic acid from the donor of substrate CMP-sialic acid to galactose containing acceptor substrates. Has alpha-2,6-sialyltransferase activity toward oligosaccharides that have the Gal-beta-1,4-GlcNAc sequence at the non-reducing end of their carbohydrate groups, but it has weak or no activities toward glycoproteins and glycolipids. This chain is Beta-galactoside alpha-2,6-sialyltransferase 2 (ST6GAL2), found in Homo sapiens (Human).